We begin with the raw amino-acid sequence, 170 residues long: Small ribosomal subunit protein uS5 (170 aa).

The S5 DRBM domain occupies 13-76; it reads LTEKLIGVNR…DQARRSMVKI (64 aa).

The protein belongs to the universal ribosomal protein uS5 family. Part of the 30S ribosomal subunit. Contacts proteins S4 and S8.

With S4 and S12 plays an important role in translational accuracy. Functionally, located at the back of the 30S subunit body where it stabilizes the conformation of the head with respect to the body. This Laribacter hongkongensis (strain HLHK9) protein is Small ribosomal subunit protein uS5.